We begin with the raw amino-acid sequence, 404 residues long: Cysteine desulfurase IscS (404 aa).

Residues 75–76 (AT), N155, Q183, and 203–205 (TGH) contribute to the pyridoxal 5'-phosphate site. K206 is modified (N6-(pyridoxal phosphate)lysine). T243 lines the pyridoxal 5'-phosphate pocket. C328 (cysteine persulfide intermediate) is an active-site residue. C328 is a binding site for [2Fe-2S] cluster.

This sequence belongs to the class-V pyridoxal-phosphate-dependent aminotransferase family. NifS/IscS subfamily. Homodimer. Forms a heterotetramer with IscU, interacts with other sulfur acceptors. Pyridoxal 5'-phosphate serves as cofactor.

Its subcellular location is the cytoplasm. It carries out the reaction (sulfur carrier)-H + L-cysteine = (sulfur carrier)-SH + L-alanine. It participates in cofactor biosynthesis; iron-sulfur cluster biosynthesis. Its function is as follows. Master enzyme that delivers sulfur to a number of partners involved in Fe-S cluster assembly, tRNA modification or cofactor biosynthesis. Catalyzes the removal of elemental sulfur atoms from cysteine to produce alanine. Functions as a sulfur delivery protein for Fe-S cluster synthesis onto IscU, an Fe-S scaffold assembly protein, as well as other S acceptor proteins. This chain is Cysteine desulfurase IscS, found in Cronobacter sakazakii (strain ATCC BAA-894) (Enterobacter sakazakii).